The primary structure comprises 62 residues: Short neurotoxin 1 (62 aa).

The interval 1–20 is disordered; sequence LECHNQQSSEPPTTTRCSGG. Intrachain disulfides connect Cys3/Cys24, Cys17/Cys41, Cys43/Cys54, and Cys55/Cys60.

Belongs to the three-finger toxin family. Short-chain subfamily. Type I alpha-neurotoxin sub-subfamily. As to expression, expressed by the venom gland.

It is found in the secreted. In terms of biological role, binds to muscle nicotinic acetylcholine receptor (nAChR) and inhibit acetylcholine from binding to the receptor, thereby impairing neuromuscular transmission. The polypeptide is Short neurotoxin 1 (Naja mossambica (Mozambique spitting cobra)).